A 433-amino-acid chain; its full sequence is N-lysine methyltransferase SMYD2 (433 aa).

In terms of domain architecture, SET spans 7 to 241; it reads GGLERFCSPG…PGEEVFTSYI (235 aa). Residue 17–19 participates in S-adenosyl-L-methionine binding; sequence KGR. Residues cysteine 52, cysteine 55, cysteine 65, cysteine 68, cysteine 74, cysteine 78, histidine 86, and cysteine 90 each coordinate Zn(2+). Residues 52-90 form an MYND-type zinc finger; it reads CEYCFTRKEGLSKCGRCKQAFYCNVECQKEDWPMHKLEC. S-adenosyl-L-methionine-binding positions include histidine 137, 206–207, and 258–260; these read NH and YFF. Serine 283 carries the phosphoserine modification.

Belongs to the class V-like SAM-binding methyltransferase superfamily. As to quaternary structure, interacts with RNA polymerase II and HELZ. Interacts with SIN3A and HDAC1. Interacts (via MYND-type zinc finger) with EPB41L3. Interacts (via SET domain) with p53/TP53. Interacts with RB1 and HSP90AA1.

It is found in the cytoplasm. Its subcellular location is the cytosol. The protein localises to the nucleus. It carries out the reaction L-lysyl(4)-[histone H3] + 3 S-adenosyl-L-methionine = N(6),N(6),N(6)-trimethyl-L-lysyl(4)-[histone H3] + 3 S-adenosyl-L-homocysteine + 3 H(+). The enzyme catalyses L-lysyl-[protein] + S-adenosyl-L-methionine = N(6)-methyl-L-lysyl-[protein] + S-adenosyl-L-homocysteine + H(+). Its function is as follows. Protein-lysine N-methyltransferase that methylates both histones and non-histone proteins, including p53/TP53 and RB1. Specifically trimethylates histone H3 'Lys-4' (H3K4me3) in vivo. The activity requires interaction with HSP90alpha. Shows even higher methyltransferase activity on p53/TP53. Monomethylates 'Lys-370' of p53/TP53, leading to decreased DNA-binding activity and subsequent transcriptional regulation activity of p53/TP53. Monomethylates RB1 at 'Lys-860'. This chain is N-lysine methyltransferase SMYD2 (SMYD2), found in Homo sapiens (Human).